We begin with the raw amino-acid sequence, 444 residues long: Ribitol-5-phosphate xylosyltransferase 1 (444 aa).

At 1-9 the chain is on the cytoplasmic side; the sequence is MRLTRTRLC. A helical; Signal-anchor for type II membrane protein transmembrane segment spans residues 10–30; it reads SLLVALYCLFSIYAAYHVFFG. Over 31 to 444 the chain is Extracellular; that stretch reads RRRRPLGTTS…ESSFFINNKV (414 aa). Positions 38–79 are disordered; it reads TTSRNSRKAAAAQAKERRGREQSALESEEWNPWEGDEKNEQR. The segment covering 51 to 60 has biased composition (basic and acidic residues); sequence AKERRGREQS.

This sequence belongs to the RXYLT1 family. In terms of assembly, forms a complex composed of FKTN/fukutin, FKRP and RXYLT1/TMEM5.

The protein resides in the golgi apparatus membrane. The enzyme catalyses 3-O-[Rib-ol-P-Rib-ol-P-3-beta-D-GalNAc-(1-&gt;3)-beta-D-GlcNAc-(1-&gt;4)-(O-6-P-alpha-D-Man)]-Thr-[protein] + UDP-alpha-D-xylose = 3-O-[beta-D-Xyl-(1-&gt;4)-Rib-ol-P-Rib-ol-P-3-beta-D-GalNAc-(1-&gt;3)-beta-D-GlcNAc-(1-&gt;4)-(O-6-P-alpha-D-Man)]-Thr-[protein] + UDP + H(+). It participates in protein modification; protein glycosylation. Its function is as follows. Acts as a UDP-D-xylose:ribitol-5-phosphate beta1,4-xylosyltransferase, which catalyzes the transfer of UDP-D-xylose to ribitol 5-phosphate (Rbo5P) to form the Xylbeta1-4Rbo5P linkage on O-mannosyl glycan. Participates in the biosynthesis of the phosphorylated O-mannosyl trisaccharide (N-acetylgalactosamine-beta-3-N-acetylglucosamine-beta-4-(phosphate-6-)mannose), a carbohydrate structure present in alpha-dystroglycan (DAG1), which is required for binding laminin G-like domain-containing extracellular proteins with high affinity. The polypeptide is Ribitol-5-phosphate xylosyltransferase 1 (Mus musculus (Mouse)).